The sequence spans 314 residues: MKIILANPRGFCAGVDRAISIVELALEIHGAPIYVRHEVVHNRFVVNGLRERGAIFVEELSEVPDGAIVIFSAHGVSQAVRQEAKDRNLKVFDATCPLVTKVHMQVARASRKGTKAILIGHKGHPEVEGTMGQYSNEDGGIFLIEKVEDIARLPMQENDNLTFMTQTTLSLDDTAETIAALKEKYPAIQGPHKNDICYATTNRQEAVRELAKLSDLVLVVGSKNSSNSNRLAELASRMGVKSQLLDEPADIQADWFNDVKTIGITAGASAPEELGQSIISRLKRFGANSIEELQGLEGNMFFEVPKELRIKEVN.

Residue Cys-12 coordinates [4Fe-4S] cluster. Positions 41 and 74 each coordinate (2E)-4-hydroxy-3-methylbut-2-enyl diphosphate. His-41 and His-74 together coordinate dimethylallyl diphosphate. Residues His-41 and His-74 each contribute to the isopentenyl diphosphate site. Residue Cys-96 participates in [4Fe-4S] cluster binding. Position 124 (His-124) interacts with (2E)-4-hydroxy-3-methylbut-2-enyl diphosphate. Dimethylallyl diphosphate is bound at residue His-124. His-124 is a binding site for isopentenyl diphosphate. The active-site Proton donor is the Glu-126. Thr-167 is a binding site for (2E)-4-hydroxy-3-methylbut-2-enyl diphosphate. Cys-197 is a binding site for [4Fe-4S] cluster. The (2E)-4-hydroxy-3-methylbut-2-enyl diphosphate site is built by Ser-225, Ser-226, Asn-227, and Ser-269. Positions 225, 226, 227, and 269 each coordinate dimethylallyl diphosphate. Ser-225, Ser-226, Asn-227, and Ser-269 together coordinate isopentenyl diphosphate.

Belongs to the IspH family. [4Fe-4S] cluster serves as cofactor.

The catalysed reaction is isopentenyl diphosphate + 2 oxidized [2Fe-2S]-[ferredoxin] + H2O = (2E)-4-hydroxy-3-methylbut-2-enyl diphosphate + 2 reduced [2Fe-2S]-[ferredoxin] + 2 H(+). It carries out the reaction dimethylallyl diphosphate + 2 oxidized [2Fe-2S]-[ferredoxin] + H2O = (2E)-4-hydroxy-3-methylbut-2-enyl diphosphate + 2 reduced [2Fe-2S]-[ferredoxin] + 2 H(+). It participates in isoprenoid biosynthesis; dimethylallyl diphosphate biosynthesis; dimethylallyl diphosphate from (2E)-4-hydroxy-3-methylbutenyl diphosphate: step 1/1. It functions in the pathway isoprenoid biosynthesis; isopentenyl diphosphate biosynthesis via DXP pathway; isopentenyl diphosphate from 1-deoxy-D-xylulose 5-phosphate: step 6/6. Catalyzes the conversion of 1-hydroxy-2-methyl-2-(E)-butenyl 4-diphosphate (HMBPP) into a mixture of isopentenyl diphosphate (IPP) and dimethylallyl diphosphate (DMAPP). Acts in the terminal step of the DOXP/MEP pathway for isoprenoid precursor biosynthesis. The chain is 4-hydroxy-3-methylbut-2-enyl diphosphate reductase from Haemophilus influenzae (strain ATCC 51907 / DSM 11121 / KW20 / Rd).